The following is a 225-amino-acid chain: DIAPVTPGVAVDLSHIPTDVKIKGFSGEDATPALEGADVVLISAGVARKPGMDRSDLFNVNAGIVKNLVQQIAKTSPQACIGIITNPVNTTVAIAAEVLKKAGVYDKNKLFGVTTLDIIRSNTFVAELKGKSSSDVEVPVIGGHSGVTILPLLSQIAGVSFSEQEVADLTKRIQNAGTEVVEAKAGGGSATLSMGQAAARFGLSLVRAMQGEKGVVECAYVEGDG.

Asp-1 contributes to the NAD(+) binding site. Positions 48 and 54 each coordinate substrate. Residues Asn-61 and 84–86 (ITN) each bind NAD(+). Substrate-binding residues include Asn-86 and Arg-120. His-144 functions as the Proton acceptor in the catalytic mechanism. Residue Met-194 coordinates NAD(+).

Belongs to the LDH/MDH superfamily. MDH type 1 family. In terms of assembly, homodimer.

It catalyses the reaction (S)-malate + NAD(+) = oxaloacetate + NADH + H(+). Functionally, catalyzes the reversible oxidation of malate to oxaloacetate. In Raoultella terrigena (Klebsiella terrigena), this protein is Malate dehydrogenase (mdh).